A 342-amino-acid polypeptide reads, in one-letter code: S-adenosylmethionine:tRNA ribosyltransferase-isomerase (342 aa).

It belongs to the QueA family. Monomer.

The protein localises to the cytoplasm. The enzyme catalyses 7-aminomethyl-7-carbaguanosine(34) in tRNA + S-adenosyl-L-methionine = epoxyqueuosine(34) in tRNA + adenine + L-methionine + 2 H(+). Its pathway is tRNA modification; tRNA-queuosine biosynthesis. Its function is as follows. Transfers and isomerizes the ribose moiety from AdoMet to the 7-aminomethyl group of 7-deazaguanine (preQ1-tRNA) to give epoxyqueuosine (oQ-tRNA). This Campylobacter jejuni subsp. jejuni serotype O:23/36 (strain 81-176) protein is S-adenosylmethionine:tRNA ribosyltransferase-isomerase.